A 505-amino-acid polypeptide reads, in one-letter code: Circadian clock protein KaiC3 (505 aa).

KaiC domains follow at residues 10–252 (EKLE…KSSD) and 253–485 (IRIT…LAGT). Ser423 bears the Phosphoserine; by autocatalysis mark. Phosphothreonine; by autocatalysis is present on Thr424.

Belongs to the KaiC family. As to quaternary structure, multimerizes, probably forming homohexamers, no interaction with KaiC1 or KaiC2 is seen. In another study forms hexamers, interacts with KaiB1, KaiB3, and KaiC1. In terms of processing, autophosphorylates and dephosphorylates. Dephosphorylation of KaiC3 was higher at 25 than at 30 or 35 degrees Celsius.

It catalyses the reaction L-seryl-[protein] + ATP = O-phospho-L-seryl-[protein] + ADP + H(+). The catalysed reaction is L-threonyl-[protein] + ATP = O-phospho-L-threonyl-[protein] + ADP + H(+). The enzyme catalyses ATP + H2O = ADP + phosphate + H(+). ATPase activity is influenced by KaiB1 and KaiB3 in vitro; ATPase is reduced 35% by the KaiB1 tetramer and 55% by the KaiB3 monomer but not affected by KaiA or the KaiB3 tetramer. Seems to be linked to dark adaption of Synechocystis cells, but is not as essential as the core oscillator KaiAB1C1 for the circadian cycle. KaiB3 and KaiC3 may cross talk with the core oscillator. Autophosphorylates and dephosphorylates independently of KaiA. Has a weak ATPase, hydrolyzes 8.5 ATP/monomer/day, has no detectable ATP synthesis activity. ATPase activity reduced 55% by KaiB3 monomer but not the KaiB3 tetramer or KaiA in vitro, reduced 35% by KaiB1 tetramer. This chain is Circadian clock protein KaiC3, found in Synechocystis sp. (strain ATCC 27184 / PCC 6803 / Kazusa).